A 212-amino-acid chain; its full sequence is uncharacterized protein (212 aa).

A helical transmembrane segment spans residues 186–206; sequence VITLISFMLFSILFFLIFLIV.

It is found in the membrane. This is an uncharacterized protein from Mycoplasma genitalium (strain ATCC 33530 / DSM 19775 / NCTC 10195 / G37) (Mycoplasmoides genitalium).